The sequence spans 353 residues: UDP-N-acetylglucosamine--N-acetylmuramyl-(pentapeptide) pyrophosphoryl-undecaprenol N-acetylglucosamine transferase (353 aa).

UDP-N-acetyl-alpha-D-glucosamine-binding positions include 10 to 12 (TGG), N124, S183, and Q283.

This sequence belongs to the glycosyltransferase 28 family. MurG subfamily.

It localises to the cell inner membrane. It carries out the reaction di-trans,octa-cis-undecaprenyl diphospho-N-acetyl-alpha-D-muramoyl-L-alanyl-D-glutamyl-meso-2,6-diaminopimeloyl-D-alanyl-D-alanine + UDP-N-acetyl-alpha-D-glucosamine = di-trans,octa-cis-undecaprenyl diphospho-[N-acetyl-alpha-D-glucosaminyl-(1-&gt;4)]-N-acetyl-alpha-D-muramoyl-L-alanyl-D-glutamyl-meso-2,6-diaminopimeloyl-D-alanyl-D-alanine + UDP + H(+). It participates in cell wall biogenesis; peptidoglycan biosynthesis. Its function is as follows. Cell wall formation. Catalyzes the transfer of a GlcNAc subunit on undecaprenyl-pyrophosphoryl-MurNAc-pentapeptide (lipid intermediate I) to form undecaprenyl-pyrophosphoryl-MurNAc-(pentapeptide)GlcNAc (lipid intermediate II). The protein is UDP-N-acetylglucosamine--N-acetylmuramyl-(pentapeptide) pyrophosphoryl-undecaprenol N-acetylglucosamine transferase of Helicobacter pylori (strain HPAG1).